The chain runs to 76 residues: Candidate secreted effector protein MPL124497 (76 aa).

An N-terminal signal peptide occupies residues 1–21; sequence MKLIIFAAISVAFMSFDQVLG.

Belongs to the CPGH1 family.

It is found in the secreted. The protein localises to the host cell. Its subcellular location is the host cytoplasm. It localises to the host nucleus. Its function is as follows. Rust effector delivered into infected tissues to modulate host functions and contribute to pathogen virulence. Enhances leaf colonization by the bacteria Pseudomonas syringae and the oomycete Hyaloperonospora arabidopsidis pathogens in an Arabidopsis thaliana infection model. The chain is Candidate secreted effector protein MPL124497 from Melampsora larici-populina (strain 98AG31 / pathotype 3-4-7) (Poplar leaf rust fungus).